The primary structure comprises 461 residues: GTPase Der (461 aa).

2 EngA-type G domains span residues 25–188 (PVVA…PNVA) and 198–371 (RRVA…ASWD). GTP is bound by residues 31–38 (GRPNVGKS), 78–82 (DTGGW), 140–143 (NKVD), 204–211 (GKPNVGKS), 251–255 (DTAGL), and 316–319 (NKWD). The KH-like domain occupies 372–454 (TRIATGPLNI…PIRINVRVRE (83 aa)).

The protein belongs to the TRAFAC class TrmE-Era-EngA-EngB-Septin-like GTPase superfamily. EngA (Der) GTPase family. As to quaternary structure, associates with the 50S ribosomal subunit.

In terms of biological role, GTPase that plays an essential role in the late steps of ribosome biogenesis. The polypeptide is GTPase Der (Mycobacterium leprae (strain TN)).